A 177-amino-acid polypeptide reads, in one-letter code: Shikimate kinase (177 aa).

ATP is bound at residue 14–19; the sequence is GSGKST. Ser-18 lines the Mg(2+) pocket. Substrate contacts are provided by Asp-36, Arg-60, and Gly-82. Arg-120 is a binding site for ATP. Arg-139 is a substrate binding site.

It belongs to the shikimate kinase family. Monomer. Mg(2+) is required as a cofactor.

It is found in the cytoplasm. The catalysed reaction is shikimate + ATP = 3-phosphoshikimate + ADP + H(+). The protein operates within metabolic intermediate biosynthesis; chorismate biosynthesis; chorismate from D-erythrose 4-phosphate and phosphoenolpyruvate: step 5/7. In terms of biological role, catalyzes the specific phosphorylation of the 3-hydroxyl group of shikimic acid using ATP as a cosubstrate. The protein is Shikimate kinase of Gloeobacter violaceus (strain ATCC 29082 / PCC 7421).